The primary structure comprises 645 residues: Developmental regulatory protein wetA (645 aa).

Disordered regions lie at residues 158 to 187 (SLHSPQRPQNTTSSDTPSPKPPNTDARKPK), 201 to 249 (TNLR…VSPP), 284 to 376 (YYGQ…QMHW), 461 to 578 (AQTF…DGAS), and 596 to 618 (GVAPSGSSKTKARREKEAQDRRR). A compositionally biased stretch (polar residues) spans 240-249 (TQGNLPVSPP). Composition is skewed to basic residues over residues 315–326 (QHHHHPHHHHQQ) and 351–361 (QHQHQHHHQQQ). The segment covering 362 to 373 (QHHQQQQQQQHQ) has biased composition (low complexity). A compositionally biased stretch (polar residues) spans 509–518 (GPSSSPTPAD). The span at 528 to 546 (SSGASVSSLRSSSGRLPAS) shows a compositional bias: low complexity. Polar residues predominate over residues 562 to 572 (ISGSNSATSLG).

Belongs to the wetA family.

Functionally, brlA, abaA and wetA are pivotal regulators of conidiophore development and conidium maturation. They act individually and together to regulate their own expression and that of numerous other sporulation-specific genes. BrlA, abaA and wetA act together to positively regulate the expression of the Pks1 gene cluster that mediates the biosynthesis of an anthraquinone derivative pigment that contributes to conidial pigmentation that provides protection from UV radiation, heat and cold stress. This chain is Developmental regulatory protein wetA, found in Metarhizium robertsii (strain ARSEF 23 / ATCC MYA-3075) (Metarhizium anisopliae (strain ARSEF 23)).